We begin with the raw amino-acid sequence, 163 residues long: Globin CTT-Z (163 aa).

Residues 1-16 (MKFFAVLALCIVGAIA) form the signal peptide. One can recognise a Globin domain in the interval 18 to 162 (PLTSDEAALV…VYTAVFQIVT (145 aa)). Residues His76 and His111 each contribute to the heme b site.

It belongs to the globin family.

The polypeptide is Globin CTT-Z (CTT-Z) (Chironomus thummi piger (Midge)).